Here is a 228-residue protein sequence, read N- to C-terminus: Deoxyribose-phosphate aldolase (228 aa).

The active-site Proton donor/acceptor is Asp96. The Schiff-base intermediate with acetaldehyde role is filled by Lys157. Lys185 serves as the catalytic Proton donor/acceptor.

The protein belongs to the DeoC/FbaB aldolase family. DeoC type 1 subfamily.

It localises to the cytoplasm. The catalysed reaction is 2-deoxy-D-ribose 5-phosphate = D-glyceraldehyde 3-phosphate + acetaldehyde. Its pathway is carbohydrate degradation; 2-deoxy-D-ribose 1-phosphate degradation; D-glyceraldehyde 3-phosphate and acetaldehyde from 2-deoxy-alpha-D-ribose 1-phosphate: step 2/2. Catalyzes a reversible aldol reaction between acetaldehyde and D-glyceraldehyde 3-phosphate to generate 2-deoxy-D-ribose 5-phosphate. The protein is Deoxyribose-phosphate aldolase of Picosynechococcus sp. (strain ATCC 27264 / PCC 7002 / PR-6) (Agmenellum quadruplicatum).